The following is a 308-amino-acid chain: Transcription factor zip-2 (308 aa).

Polar residues predominate over residues 217-229 (QSSSSSTVETTIT). The tract at residues 217 to 277 (QSSSSSTVET…RESKEERERL (61 aa)) is disordered. In terms of domain architecture, bZIP spans 242–305 (SSDYRHKRDK…EDYKRLVMMF (64 aa)). Residues 246–276 (RHKRDKNNLASQKSRQKRQAKIRESKEERER) form a basic motif region. Residues 266 to 277 (KIRESKEERERL) show a composition bias toward basic and acidic residues. The tract at residues 277–291 (LEKRKVQLQAMVLTL) is leucine-zipper.

The protein belongs to the bZIP family. C/EBP subfamily. As to expression, expressed in the pharynx and throughout the intestine.

The protein localises to the nucleus. Functionally, transcription factor that binds to the promoter and the enhancer regions of target genes. May act together with the bZIP transcription factor, cebp-2. Involved in responding to mitochondrial damage. Plays a role in the delay of age-associated mitochondrial fragmentation and muscle decline. Has a protective role in response to infection by the Gram-negative bacterium P.aeruginosa. Required to prevent P.aeruginosa ToxA-mediated lethality. Required for the activation of several infection response genes including irg-1 and irg-2 following P.aeruginosa infection; target gene activation may involve effects of the bacterial toxin, ToxA, and perhaps other toxins. The sequence is that of Transcription factor zip-2 from Caenorhabditis elegans.